An 88-amino-acid chain; its full sequence is Putative membrane protein insertion efficiency factor (88 aa).

This sequence belongs to the UPF0161 family.

Its subcellular location is the cell inner membrane. In terms of biological role, could be involved in insertion of integral membrane proteins into the membrane. This chain is Putative membrane protein insertion efficiency factor, found in Burkholderia vietnamiensis (strain G4 / LMG 22486) (Burkholderia cepacia (strain R1808)).